The chain runs to 531 residues: MAALGCARLRWALRGAGRGLCPHGARAKAAIPAALPSDKATGAPGAGPGVRRRQRSLEEIPRLGQLRFFFQLFVQGYALQLHQLQVLYKAKYGPMWMSYLGPQMHVNLASAPLLEQVMRQEGKYPVRNDMELWKEHRDQHDLTYGPFTTEGHHWYQLRQALNQRLLKPAEAALYTDAFNEVIDDFMTRLDQLRAESASGNQVSDMAQLFYYFALEAICYILFEKRIGCLQRSIPEDTVTFVRSIGLMFQNSLYATFLPKWTRPVLPFWKRYLDGWNAIFSFGKKLIDEKLEDMEAQLQAAGPDGIQVSGYLHFLLASGQLSPREAMGSLPELLMAGVDTTSNTLTWALYHLSKDPEIQEALHEEVVGVVPAGQVPQHKDFAHMPLLKAVLKETLRLYPVVPTNSRIIEKEIEVDGFLFPKNTQFVFCHYVVSRDPTAFSEPESFQPHRWLRNSQPATPRIQHPFGSVPFGYGVRACLGRRIAELEMQLLLARLIQKYKVVLAPETGELKSVARIVLVPNKKVGLQFLQRQC.

Residues Met1–Ala33 constitute a mitochondrion transit peptide. Position 283 is an N6-acetyllysine (Lys283). The segment at Pro384–Pro398 is sterol-binding. Cys476 contributes to the heme binding site. Residues Lys509 and Lys520 each carry the N6-acetyllysine modification.

The protein belongs to the cytochrome P450 family. In terms of assembly, interacts with HSP70; this interaction is required for initial targeting to mitochondria. Heme is required as a cofactor. As to expression, expressed in the neural retina and underlying retinal pigment epithelium (at protein level). Expressed in the gray and white matter of cerebellum (at protein level).

It is found in the mitochondrion inner membrane. It carries out the reaction 5beta-cholestane-3alpha,7alpha,12alpha-triol + 6 reduced [adrenodoxin] + 3 O2 + 5 H(+) = (25R)-3alpha,7alpha,12alpha-trihydroxy-5beta-cholestan-26-oate + 6 oxidized [adrenodoxin] + 4 H2O. The enzyme catalyses cholestanol + 2 reduced [adrenodoxin] + O2 + 2 H(+) = (25R)-26-hydroxycholestanol + 2 oxidized [adrenodoxin] + H2O. It catalyses the reaction (25R)-3beta-hydroxycholest-5-en-7-one-26-al + 2 reduced [adrenodoxin] + O2 + H(+) = (25R)-3beta-hydroxycholest-5-en-7-one-26-oate + 2 oxidized [adrenodoxin] + H2O. The catalysed reaction is (25R)-3beta,26-dihydroxycholest-5-en-7-one + 2 reduced [adrenodoxin] + O2 + 2 H(+) = (25R)-3beta-hydroxycholest-5-en-7-one-26-al + 2 oxidized [adrenodoxin] + 2 H2O. It carries out the reaction 7-oxocholesterol + 2 reduced [adrenodoxin] + O2 + 2 H(+) = (25R)-3beta,26-dihydroxycholest-5-en-7-one + 2 oxidized [adrenodoxin] + H2O. The enzyme catalyses calciol + 2 reduced [adrenodoxin] + O2 + 2 H(+) = calcidiol + 2 oxidized [adrenodoxin] + H2O. It catalyses the reaction (25R)-5beta-cholestane-3alpha,7alpha,12alpha,26-tetrol + 2 reduced [adrenodoxin] + O2 + 2 H(+) = (25R)-3alpha,7alpha,12alpha-trihydroxy-5beta-cholestan-26-al + 2 oxidized [adrenodoxin] + 2 H2O. The catalysed reaction is 2 reduced [adrenodoxin] + cholesterol + O2 + 2 H(+) = (25R)-cholest-5-ene-3beta,26-diol + 2 oxidized [adrenodoxin] + H2O. It carries out the reaction (25R)-3beta,4beta-dihydroxycholest-5-en-26-al + 2 reduced [adrenodoxin] + O2 + H(+) = (25R)-3beta,4beta-dihydroxycholest-5-en-26-oate + 2 oxidized [adrenodoxin] + H2O. The enzyme catalyses (25R)-4beta,26-dihydroxycholesterol + 2 reduced [adrenodoxin] + O2 + 2 H(+) = (25R)-3beta,4beta-dihydroxycholest-5-en-26-al + 2 oxidized [adrenodoxin] + 2 H2O. It catalyses the reaction 4beta-hydroxycholesterol + 2 reduced [adrenodoxin] + O2 + 2 H(+) = (25R)-4beta,26-dihydroxycholesterol + 2 oxidized [adrenodoxin] + H2O. The catalysed reaction is (25R)-3beta-hydroxy-5-cholesten-26-al + 2 reduced [adrenodoxin] + O2 + H(+) = (25R)-3beta-hydroxy-5-cholestenoate + 2 oxidized [adrenodoxin] + H2O. It carries out the reaction (25R)-cholest-5-ene-3beta,26-diol + 2 reduced [adrenodoxin] + O2 + 2 H(+) = (25R)-3beta-hydroxy-5-cholesten-26-al + 2 oxidized [adrenodoxin] + 2 H2O. The enzyme catalyses (25R)-3alpha,7alpha,12alpha-trihydroxy-5beta-cholestan-26-al + 2 reduced [adrenodoxin] + O2 + H(+) = (25R)-3alpha,7alpha,12alpha-trihydroxy-5beta-cholestan-26-oate + 2 oxidized [adrenodoxin] + H2O. It catalyses the reaction 5beta-cholestane-3alpha,7alpha,12alpha-triol + 2 reduced [adrenodoxin] + O2 + 2 H(+) = (25R)-5beta-cholestane-3alpha,7alpha,12alpha,26-tetrol + 2 oxidized [adrenodoxin] + H2O. Its pathway is hormone biosynthesis; cholecalciferol biosynthesis. It participates in steroid metabolism; cholesterol degradation. It functions in the pathway lipid metabolism; bile acid biosynthesis. Its function is as follows. Cytochrome P450 monooxygenase that catalyzes regio- and stereospecific hydroxylation of cholesterol and its derivatives. Hydroxylates (with R stereochemistry) the terminal methyl group of cholesterol side-chain in a three step reaction to yield at first a C26 alcohol, then a C26 aldehyde and finally a C26 acid. Regulates cholesterol homeostasis by catalyzing the conversion of excess cholesterol to bile acids via both the 'neutral' (classic) and the 'acid' (alternative) pathways. May also regulate cholesterol homeostasis via generation of active oxysterols, which act as ligands for NR1H2 and NR1H3 nuclear receptors, modulating the transcription of genes involved in lipid metabolism. Plays a role in cholestanol metabolism in the cerebellum. Similarly to cholesterol, hydroxylates cholestanol and may facilitate sterol diffusion through the blood-brain barrier to the systemic circulation for further degradation. Also hydroxylates retinal 7-ketocholesterol, a noxious oxysterol with pro-inflammatory and pro-apoptotic effects, and may play a role in its elimination from the retinal pigment epithelium. May play a redundant role in vitamin D biosynthesis. Catalyzes 25-hydroxylation of vitamin D3 that is required for its conversion to a functionally active form. The protein is Sterol 26-hydroxylase, mitochondrial of Homo sapiens (Human).